We begin with the raw amino-acid sequence, 1122 residues long: MARSPGDRCALLLLVQLLAVVCLDFGNGLHLEVFSPRNEGKPFPKHTHLVRQKRAWITAPVALREGEDLSRKNPIAKIHSDLAEEKGIKITYKYTGKGITEPPFGIFVFDRNTGELNITSILDREETPYFLLTGYALDSRGNNLEKPLELRIKVLDINDNEPVFTQEVFVGSIEELSAAHTLVMKITATDADDPETLNAKVSYRIVSQEPANSHMFYLNKDTGEIYTTSFTLDREEHSSYSLTVEARDGNGQITDKPVQQAQVQIRILDVNDNIPVVENKMYEGTVEENQVNVEVMRIKVTDADEVGSDNWLANFTFASGNEGGYFHIETDTQTNEGIVTLVKEVDYEEMKKLDLSIIVTNKAAFHKSILSKYKATPIPITVKVKNVVEGIHFKSSVVSFRASEAMDRSSLSRSIGNFQVFDEDTGQAAKVTYVKVQDTDNWVSVDSVTSEIKLVKIPDFESRYVQNGTYTAKVVAISKEHPQKTITGTIVITVEDVNDNCPVLVDSVRSVCEDEPYVNVTAEDLDGAQNSAPFSFSIIDQPPGTAQKWKITHQESTSVLLQQSERKRGRSEIPFLISDSQGFSCPERQVLQLTVCECLKGGGCVAAQYDNYVGLGPAAIALMILALLLLLLVPLLLLICHCGGGAKGFTPIPGTIEMLHPWNNEGAPPEDKVVPSLLVADHAESSAVRGGVGGAMLKEGMMKGSSSASVTKGQHELSEVDGRWEEHRSLLTAGATHHVRTAGTIAANEAVRTRATGSSRDMSGARGAVAVNEEFLRSYFTEKAASYNGEDDLHMAKDCLLVYSQEDTASLRGSVGCCSFIEGELDDLFLDDLGLKFKTLAEVCLGRKIDLDVDIEQRQKPVREASVSAASGSHYEQAVTSSESAYSSNTGFPAPKPLHEVHTEKVTQEIVTESSVSSRQSQKVVPPPDPVASGNIIVTETSYAKGSAVPPSTVLLAPRQPQSLIVTERVYAPTSTLVDQHYANEEKVLVTERVIQPNGGIPKPLEVTQHLKDAQYVMVRERESILAPSSGVQPTLAMPSVAAGGQNVTVTERILTPASTLQSSYQIPSETSITARNTVLSSVGSIGPLPNLDLEESDRPNSTITTSSTRVTKHSTMQHSYS.

The N-terminal stretch at 1 to 28 (MARSPGDRCALLLLVQLLAVVCLDFGNG) is a signal peptide. The propeptide occupies 29 to 54 (LHLEVFSPRNEGKPFPKHTHLVRQKR). Cadherin domains lie at 55-164 (AWIT…EPVF), 165-277 (TQEV…IPVV), 278-398 (ENKM…SSVV), and 397-504 (VVSF…CPVL). Residues 55–618 (AWITAPVALR…YDNYVGLGPA (564 aa)) lie on the Extracellular side of the membrane. Residue Asn-117 is glycosylated (N-linked (GlcNAc...) asparagine). N-linked (GlcNAc...) asparagine glycosylation is found at Asn-314, Asn-467, and Asn-519. Residues 619 to 639 (AIALMILALLLLLLVPLLLLI) form a helical membrane-spanning segment. Residues 640-1122 (CHCGGGAKGF…KHSTMQHSYS (483 aa)) lie on the Cytoplasmic side of the membrane. Phosphoserine is present on residues Ser-685, Ser-706, Ser-709, and Ser-729. Thr-808 carries the phosphothreonine modification. Residues Ser-810, Ser-814, and Ser-819 each carry the phosphoserine modification. Desmoglein repeat repeat units lie at residues 885 to 916 (AYSSNTGFPAPKPLHEVHTEKVTQEIVTESSV), 917 to 945 (SSRQSQKVVPPPDPVASGNIIVTETSYAK), 946 to 971 (GSAVPPSTVLLAPRQPQSLIVTERVY), 972 to 995 (APTSTLVDQHYANEEKVLVTERVI), 996 to 1024 (QPNGGIPKPLEVTQHLKDAQYVMVRERES), and 1025 to 1055 (ILAPSSGVQPTLAMPSVAAGGQNVTVTERIL). The interval 913–932 (ESSVSSRQSQKVVPPPDPVA) is disordered. The span at 914–924 (SSVSSRQSQKV) shows a compositional bias: low complexity. Residues 1089–1122 (LPNLDLEESDRPNSTITTSSTRVTKHSTMQHSYS) form a disordered region. The span at 1100–1122 (PNSTITTSSTRVTKHSTMQHSYS) shows a compositional bias: polar residues. Ser-1122 is subject to Phosphoserine.

In terms of assembly, interacts with PKP2. Interacts with CTNNB1; the interaction promotes localization of CTNNB1 at cell junctions thus reducing its nuclear localization and subsequent transcription of CTNNB1/TCF-target genes. Post-translationally, palmitoylated by ZDHHC5 at the plasma membrane. In terms of tissue distribution, expressed in undifferentiated pluripotent stem cells, expression decreases during differentiation (at protein level). Expressed by embryonic stem cells, expression is reduced during differentiation (at protein level). Expressed at the apical-lateral cell membrane of kidney tubular epithelial cells (at protein level). Expressed in epidermis and heart (at protein level). Expressed in the brain, spleen, lung, liver skeletal muscle, kidney and testis.

It localises to the cell membrane. Its subcellular location is the cell junction. The protein resides in the desmosome. It is found in the cytoplasm. In terms of biological role, a component of desmosome cell-cell junctions which are required for positive regulation of cellular adhesion. Involved in the interaction of plaque proteins and intermediate filaments mediating cell-cell adhesion. Required for proliferation and viability of embryonic stem cells in the blastocyst, thereby crucial for progression of post-implantation embryonic development. Maintains pluripotency by regulating epithelial to mesenchymal transition/mesenchymal to epithelial transition (EMT/MET) via interacting with and sequestering CTNNB1 to sites of cell-cell contact, thereby reducing translocation of CTNNB1 to the nucleus and subsequent transcription of CTNNB1/TCF-target genes. Promotes pluripotency and the multi-lineage differentiation potential of hematopoietic stem cells. Plays a role in endothelial cell sprouting and elongation via mediating the junctional-association of cortical actin fibers and CDH5. Plays a role in limiting inflammatory infiltration and the apoptotic response to injury in kidney tubular epithelial cells, potentially via its role in maintaining cell-cell adhesion and the epithelial barrier. In Mus musculus (Mouse), this protein is Desmoglein-2 (Dsg2).